Consider the following 240-residue polypeptide: Probable transcriptional regulatory protein VFMJ11_A0186 (240 aa).

Belongs to the TACO1 family.

The protein resides in the cytoplasm. The sequence is that of Probable transcriptional regulatory protein VFMJ11_A0186 from Aliivibrio fischeri (strain MJ11) (Vibrio fischeri).